Consider the following 310-residue polypeptide: Putative carbonic anhydrase 5 (310 aa).

An N-terminal signal peptide occupies residues 1–20; sequence MPSHLLVLSLLVALLVVVSC. Positions 26–280 constitute an Alpha-carbonic anhydrase domain; the sequence is HGWGYDENNG…LNGRRIQYRP (255 aa). 3 residues coordinate Zn(2+): H117, H119, and H142. 223–224 contributes to the substrate binding site; that stretch reads TT.

The protein belongs to the alpha-carbonic anhydrase family.

It localises to the secreted. It carries out the reaction hydrogencarbonate + H(+) = CO2 + H2O. Its function is as follows. Reversible hydration of carbon dioxide. The protein is Putative carbonic anhydrase 5 (cah-5) of Caenorhabditis elegans.